Reading from the N-terminus, the 119-residue chain is Anther-specific protein BCP1 (119 aa).

The first 23 residues, 1 to 23, serve as a signal peptide directing secretion; the sequence is MGRQNVVVVFGLVFLAVLGLAAA. Low complexity predominate over residues 24–42; sequence ASSPSPSASPSKAPSTSTP. A disordered region spans residues 24–95; it reads ASSPSPSASP…PSGSADSADS (72 aa). Topologically, residues 24-98 are extracellular; the sequence is ASSPSPSASP…SADSADSGAA (75 aa). Positions 56–69 are enriched in acidic residues; it reads TDDDAAASPGDDDV. The span at 82–95 shows a compositional bias: low complexity; sequence GSNGPSGSADSADS. Residues 99 to 118 traverse the membrane as a helical segment; that stretch reads ALGVSAVVVGVTSIVGSFLF. Residue F119 is a topological domain, cytoplasmic.

In terms of tissue distribution, expressed in mature pollen grains, developing microspores and tapetal cells.

Its subcellular location is the membrane. In terms of biological role, required for pollen fertility and development. Active in both diploid tapetum and haploid microspores. Major pollen protein. This chain is Anther-specific protein BCP1 (BCP1), found in Brassica campestris (Field mustard).